The primary structure comprises 381 residues: Alkanesulfonate monooxygenase (381 aa).

The protein belongs to the SsuD family. In terms of assembly, homotetramer.

It catalyses the reaction an alkanesulfonate + FMNH2 + O2 = an aldehyde + FMN + sulfite + H2O + 2 H(+). Catalyzes the desulfonation of aliphatic sulfonates. This is Alkanesulfonate monooxygenase from Escherichia coli (strain SE11).